The following is a 271-amino-acid chain: uncharacterized protein (271 aa).

Disordered regions lie at residues 50–93 and 128–233; these read KKKT…SSSL and KNNY…RKKV. Low complexity-rich tracts occupy residues 61 to 93 and 129 to 165; these read SPTK…SSSL and NNYN…NNNN. The segment covering 169 to 179 has biased composition (basic and acidic residues); sequence TDKKEGEKNEN. 2 stretches are compositionally biased toward acidic residues: residues 180–199 and 207–217; these read ENEN…DIIE and MDEELENEQVE.

This is an uncharacterized protein from Dictyostelium discoideum (Social amoeba).